The chain runs to 343 residues: MLNDTTSKDYEYEYDQEQYSDLLNVPVDCPAGNCFSNDAYLIVLLGLYSVIFLVGVPGNTLLAWVTWKESRHRLGASWFLHLTMADLLCCVSLPFLAVPIAQKGHWPYGTAGCWLLSSITVLSMYASVLLLTGLSGDLFLLAFRPSWKNADQRTCGVRVVQVSSWMLALLLTVPGAVYRKLLQEHYPPRLVCGTNYGGSVTAEVTITTVRFLFGFLVPLVFMASCHGILQRQMARRHWPLGTAVVVGFFICWTPFHLLRVIIAVASSHSPLLAWALEAEPLVTGLALAHSALNPIMFLYFGRKQLCKSLQAACHWALRDLQDEEESAVTKVSTSQEMVSEMPV.

The Extracellular portion of the chain corresponds to 1 to 44; it reads MLNDTTSKDYEYEYDQEQYSDLLNVPVDCPAGNCFSNDAYLIVL. The N-linked (GlcNAc...) asparagine glycan is linked to Asn3. Residues 45 to 67 traverse the membrane as a helical segment; that stretch reads LGLYSVIFLVGVPGNTLLAWVTW. The Cytoplasmic segment spans residues 68 to 78; it reads KESRHRLGASW. Residues 79 to 101 traverse the membrane as a helical segment; the sequence is FLHLTMADLLCCVSLPFLAVPIA. Topologically, residues 102–120 are extracellular; that stretch reads QKGHWPYGTAGCWLLSSIT. Cys113 and Cys192 are joined by a disulfide. Residues 121-143 form a helical membrane-spanning segment; that stretch reads VLSMYASVLLLTGLSGDLFLLAF. Topologically, residues 144-155 are cytoplasmic; sequence RPSWKNADQRTC. A helical membrane pass occupies residues 156–178; sequence GVRVVQVSSWMLALLLTVPGAVY. Topologically, residues 179-208 are extracellular; that stretch reads RKLLQEHYPPRLVCGTNYGGSVTAEVTITT. A helical transmembrane segment spans residues 209–231; it reads VRFLFGFLVPLVFMASCHGILQR. The Cytoplasmic portion of the chain corresponds to 232-243; it reads QMARRHWPLGTA. A helical membrane pass occupies residues 244 to 266; the sequence is VVVGFFICWTPFHLLRVIIAVAS. At 267–280 the chain is on the extracellular side; that stretch reads SHSPLLAWALEAEP. A helical membrane pass occupies residues 281 to 300; that stretch reads LVTGLALAHSALNPIMFLYF. Residues 301-343 lie on the Cytoplasmic side of the membrane; it reads GRKQLCKSLQAACHWALRDLQDEEESAVTKVSTSQEMVSEMPV. Phosphoserine is present on Ser326.

This sequence belongs to the G-protein coupled receptor 1 family. In terms of assembly, interacts with C3 (the anaphylatoxin peptide C3a and the adipogenic hormone ASP); the interaction occurs with higher affinity for ASP, enhancing the phosphorylation and activation of GPR77, recruitment of ARRB2 to the cell surface and endocytosis of GRP77.

The protein localises to the cell membrane. Receptor for the chemotactic and inflammatory C3a, C4a and C5a anaphylatoxin peptides and also for their dearginated forms ASP/C3adesArg, C4adesArg and C5adesArg respectively. Couples weakly to G(i)-mediated signaling pathways. In Rattus norvegicus (Rat), this protein is C5a anaphylatoxin chemotactic receptor 2 (C5ar2).